Here is a 285-residue protein sequence, read N- to C-terminus: uncharacterized protein (285 aa).

S168 serves as a coordination point for substrate. Y181 serves as the catalytic Proton acceptor.

This sequence belongs to the short-chain dehydrogenases/reductases (SDR) family.

This is an uncharacterized protein from Haemophilus influenzae (strain ATCC 51907 / DSM 11121 / KW20 / Rd).